We begin with the raw amino-acid sequence, 736 residues long: Catalase-peroxidase (736 aa).

The interval 1–25 (MSENGKCPVTGKTSKPVAGGGTSNQ) is disordered. Positions 96–224 (WHSAGTYRMG…LAAVQMGLIY (129 aa)) form a cross-link, tryptophyl-tyrosyl-methioninium (Trp-Tyr) (with M-250). The active-site Proton acceptor is H97. The segment at residues 224–250 (YVNPEGPDGNPDPIASGKDVRETFARM) is a cross-link (tryptophyl-tyrosyl-methioninium (Tyr-Met) (with W-96)). Position 265 (H265) interacts with heme b. Residues 294–313 (GWKSSHGRGKGGDTISSGIE) form a disordered region.

Belongs to the peroxidase family. Peroxidase/catalase subfamily. Homodimer or homotetramer. Heme b serves as cofactor. Post-translationally, formation of the three residue Trp-Tyr-Met cross-link is important for the catalase, but not the peroxidase activity of the enzyme.

It carries out the reaction H2O2 + AH2 = A + 2 H2O. The enzyme catalyses 2 H2O2 = O2 + 2 H2O. Functionally, bifunctional enzyme with both catalase and broad-spectrum peroxidase activity. The sequence is that of Catalase-peroxidase from Desulfatibacillum aliphaticivorans.